A 347-amino-acid polypeptide reads, in one-letter code: MDLQAQLEELKTKTLETLQSLTGNHTKELQDLRVAVLGKKGSLTELLKGLKDLSNDLRPVVGKQVNEVRDLLTKAFEEQAKIVEAAKIQAQLDAESIDVTLPGRQMTLGHRHVLTQTSEEIEDIFLGMGFQIVDGFEVEKDYYNFERMNLPKDHPARDMQDTFYITEEILLRTHTSPVQARTLDQHDFSKGPLKMVSPGRVFRRDTDDATHSHQFHQIEGLVVGKNISMGDLKGTLEMIIKKMFGEERSIRLRPSYFPFTEPSVEVDVSCFKCGGKGCNVCKKTGWIEILGAGMVHPSVLEMSGVDAKEYSGFAFGLGQERIAMLRYGINDIRGFYQGDQRFSEQFN.

Mg(2+) is bound at residue Glu261.

It belongs to the class-II aminoacyl-tRNA synthetase family. Phe-tRNA synthetase alpha subunit type 1 subfamily. As to quaternary structure, tetramer of two alpha and two beta subunits. Mg(2+) serves as cofactor.

It localises to the cytoplasm. The enzyme catalyses tRNA(Phe) + L-phenylalanine + ATP = L-phenylalanyl-tRNA(Phe) + AMP + diphosphate + H(+). The polypeptide is Phenylalanine--tRNA ligase alpha subunit (Streptococcus pyogenes serotype M3 (strain ATCC BAA-595 / MGAS315)).